The following is a 1935-amino-acid chain: MGDSEMAVFGAAAPYLRKSEKERLEAQTRPFDLKKDVFVPDDKQEFVKAKIVSREGGKVTAETEYGKTVTVKEDQVMQQNPPKFDKIEDMAMLTFLHEPAVLYNLKDRYGSWMIYTYSGLFCVTVNPYKWLPVYTPEVVAAYRGKKRSEAPPHIFSISDNAYQYMLTDRENQSILITGESGAGKTVNTKRVIQYFAVIAAIGDRSKKDQSPGKGTLEDQIIQANPALEAFGNAKTVRNDNSSRFGKFIRIHFGATGKLASADIETYLLEKSRVIFQLKAERDYHIFYQILSNKKPELLDMLLITNNPYDYAFISQGETTVASIDDAEELMATDNAFDVLGFTSEEKNSMYKLTGAIMHFGNMKFKLKQREEQAEPDGTEEADKSAYLMGLNSADLLKGLCHPRVKVGNEYVTKGQNVQQVIYATGALAKAVYERMFNWMVTRINATLETKQPRQYFIGVLDIAGFEIFDFNSFEQLCINFTNEKLQQFFNHHMFVLEQEEYKKEGIEWTFIDFGMDLQACIDLIEKPMGIMSILEEECMFPKATDMTFKAKLFDNHLGKSANFQKPRNIKGKPEAHFSLIHYAGIVDYNIIGWLQKNKDPLNETVVGLYQKSSLKLLSTLFANYAGADAPIEKGKGKAKKGSSFQTVSALHRENLNKLMTNLRSTHPHFVRCIIPNETKSPGVMDNPLVMHQLRCNGVLEGIRICRKGFPNRILYGDFRQRYRILNPAAIPEGQFIDSRKGAEKLLSSLDIDHNQYKFGHTKVFFKAGLLGLLEEMRDERLSRIITRIQAQSRGVLARMEYKKLLERRDSLLVIQWNIRAFMGVKNWPWMKLYFKIKPLLKSAEREKEMASMKEEFTRLKEALEKSEARRKELEEKMVSLLQEKNDLQLQVQAEQDNLADAEERCDQLIKNKIQLEAKVKEMNERLEDEEEMNAELTAKKRKLEDECSELKRDIDDLELTLAKVEKEKHATENKVKNLTEEMAGLDEIIAKLTKEKKALQEAHQQALDDLQAEEDKVNTLTKAKVKLEQQVDDLEGSLEQEKKVRMDLERAKRKLEGDLKLTQESIMDLENDKQQLDERLKKKDFELNALNARIEDEQALGSQLQKKLKELQARIEELEEELEAERTARAKVEKLRSDLSRELEEISERLEEAGGATSVQIEMNKKREAEFQKMRRDLEEATLQHEATAAALRKKHADSVAELGEQIDNLQRVKQKLEKEKSEFKLELDDVTSNMEQIIKAKANLEKMCRTLEDQMNEHRSKAEETQRSVNDLTSQRAKLQTENGELSRQLDEKEALISQLTRGKLTYTQQLEDLKRQLEEEVKAKNALAHALQSARHDCDLLREQYEEETEAKAELQRVLSKANSEVAQWRTKYETDAIQRTEELEEAKKKLAQRLQEAEEAVEAVNAKCSSLEKTKHRLQNEIEDLMVDVERSNAAAAALDKKQRNFDKILAEWKQKYEESQSELESSQKEARSLSTELFKLKNAYEESLEHLETFKRENKNLQEEISDLTEQLGSSGKTIHELEKVRKQLEAEKMELQSALEEAEASLEHEEGKILRAQLEFNQIKAEIERKLAEKDEEMEQAKRNHLRVVDSLQTSLDAETRSRNEALRVKKKMEGDLNEMEIQLSHANRMAAEAQKQVKSLQSLLKDTQIQLDDAVRANDDLKENIAIVERRNNLLQAELEELRAVVEQTERSRKLAEQELIETSERVQLLHSQNTSLINQKKKMDADLSQLQTEVEEAVQECRNAEEKAKKAITDAAMMAEELKKEQDTSAHLERMKKNMEQTIKDLQHRLDEAEQIALKGGKKQLQKLEARVRELENELEAEQKRNAESVKGMRKSERRIKELTYQTEEDRKNLLRLQDLVDKLQLKVKAYKRQAEEAEEQANTNLSKFRKVQHELDEAEERADIAESQVNKLRAKSRDIGTKGLNEE.

A Myosin N-terminal SH3-like domain is found at 32-81 (DLKKDVFVPDDKQEFVKAKIVSREGGKVTAETEYGKTVTVKEDQVMQQNP). One can recognise a Myosin motor domain in the interval 85 to 778 (DKIEDMAMLT…LLGLLEEMRD (694 aa)). Lys-129 is modified (N6,N6,N6-trimethyllysine). 178–185 (GESGAGKT) serves as a coordination point for ATP. Residue Thr-378 is modified to Phosphothreonine. 2 actin-binding regions span residues 655 to 677 (LNKLMTNLRSTHPHFVRCIIPNE) and 757 to 771 (KFGHTKVFFKAGLLG). In terms of domain architecture, IQ spans 781 to 810 (LSRIITRIQAQSRGVLARMEYKKLLERRDS). A coiled-coil region spans residues 839 to 1935 (LLKSAEREKE…DIGTKGLNEE (1097 aa)). Residues Ser-1137 and Ser-1269 each carry the phosphoserine modification. A Phosphothreonine modification is found at Thr-1282. Phosphotyrosine is present on Tyr-1308. The residue at position 1309 (Thr-1309) is a Phosphothreonine. A Phosphoserine modification is found at Ser-1510. Position 1513 is a phosphothreonine (Thr-1513). A disordered region spans residues 1907-1935 (EERADIAESQVNKLRAKSRDIGTKGLNEE). Residues 1923 to 1935 (KSRDIGTKGLNEE) are compositionally biased toward basic and acidic residues.

This sequence belongs to the TRAFAC class myosin-kinesin ATPase superfamily. Myosin family. In terms of assembly, muscle myosin is a hexameric protein that consists of 2 heavy chain subunits (MHC), 2 alkali light chain subunits (MLC) and 2 regulatory light chain subunits (MLC-2). Interacts with ECPAS. Interacts (via C-terminus) with LRRC39. In terms of tissue distribution, both wild type and variant Gln-403 are detected in skeletal muscle (at protein level).

The protein resides in the cytoplasm. It is found in the myofibril. Its subcellular location is the sarcomere. In terms of biological role, myosins are actin-based motor molecules with ATPase activity essential for muscle contraction. Forms regular bipolar thick filaments that, together with actin thin filaments, constitute the fundamental contractile unit of skeletal and cardiac muscle. The chain is Myosin-7 (MYH7) from Homo sapiens (Human).